The following is a 775-amino-acid chain: Chitin synthase 6 (775 aa).

6 helical membrane passes run 19–39, 54–74, 94–114, 441–461, 470–490, and 498–518; these read VLLMACLEWFLWLAAFLYCLV, CIIVGTAFVLLRVIFLPIMVV, LQWFAFWAFAILLTVPWLFCI, FMQNTIRTTALLFFVMVLAIM, LPVGFIAISLGLNWMLMLYFG, and IWLYPLMFILNPFYNWYYMVY. Residues 532-541 show a composition bias toward low complexity; it reads RADAAAADSH. 2 disordered regions span residues 532-603 and 702-775; these read RADA…DGKF and PSAF…KTSR. Over residues 542-556 the composition is skewed to basic and acidic residues; that stretch reads TTAREAAEQAEKQGD. Residues 577-586 show a composition bias toward polar residues; sequence NRESTTTSEL. A compositionally biased stretch (low complexity) spans 702-713; it reads PSAFPHAHSASA. N-linked (GlcNAc...) asparagine glycosylation is present at Asn724. Basic and acidic residues predominate over residues 732–741; that stretch reads RSEDIQRFSE. Over residues 754–763 the composition is skewed to polar residues; it reads SRNVGNSSFA. Asn759 carries an N-linked (GlcNAc...) asparagine glycan. The segment covering 766 to 775 has biased composition (basic residues); that stretch reads MAKRTPKTSR.

It belongs to the chitin synthase family. Class VII subfamily.

It localises to the cell membrane. The catalysed reaction is [(1-&gt;4)-N-acetyl-beta-D-glucosaminyl](n) + UDP-N-acetyl-alpha-D-glucosamine = [(1-&gt;4)-N-acetyl-beta-D-glucosaminyl](n+1) + UDP + H(+). In terms of biological role, polymerizes chitin, a structural polymer of the cell wall and septum, by transferring the sugar moiety of UDP-GlcNAc to the non-reducing end of the growing chitin polymer. Shows additive effects in septum formation with CHS1, CHS2, CHS3A, CHS4, CHS5 and CHS7. Involved in virulence and mediates mycotoxin deoxinivalenol (DON) biosynthesis via the regulation of the expression of TRI4, TRI5 and TRI6. In Gibberella zeae (strain ATCC MYA-4620 / CBS 123657 / FGSC 9075 / NRRL 31084 / PH-1) (Wheat head blight fungus), this protein is Chitin synthase 6.